A 376-amino-acid chain; its full sequence is MKKIILVAGGTGGHFFPAVALGEELIKRGYEVHFITDLRCKQYIKQDMKVIFHILDLKRSGNIFLFLPRLSIAVLKAIKLLYNMKPSVTVGFGGYPVIAPMFAAIFLRVPIIIHEQNSYLGKVNKFFASFAKKIAISYAKIKNLPEFAKSKIVVTGGVVRENIRELKVIEMSSRGLTTGSKKSLIKALDSVVKPRNDKLFTIFIFGGSQGAKLFSELIPASIQILMQKQPSLELNIIQQAALDDQVKIKDIYSKLNITYAFAEFFDNMALQYKEADLVISRAGASTIEELTYIGLPAIFIPLPSAADNHQYYNAQLLEDEKTGWCLEQNNISAGKLADKILELISNPKILEDASQNLLKRRKEGHKLLSNLIEEVI.

UDP-N-acetyl-alpha-D-glucosamine contacts are provided by residues 11-13, Asn117, Arg160, Ser208, and Gln310; that span reads TGG.

This sequence belongs to the glycosyltransferase 28 family. MurG subfamily.

It localises to the cell inner membrane. The enzyme catalyses di-trans,octa-cis-undecaprenyl diphospho-N-acetyl-alpha-D-muramoyl-L-alanyl-D-glutamyl-meso-2,6-diaminopimeloyl-D-alanyl-D-alanine + UDP-N-acetyl-alpha-D-glucosamine = di-trans,octa-cis-undecaprenyl diphospho-[N-acetyl-alpha-D-glucosaminyl-(1-&gt;4)]-N-acetyl-alpha-D-muramoyl-L-alanyl-D-glutamyl-meso-2,6-diaminopimeloyl-D-alanyl-D-alanine + UDP + H(+). Its pathway is cell wall biogenesis; peptidoglycan biosynthesis. Its function is as follows. Cell wall formation. Catalyzes the transfer of a GlcNAc subunit on undecaprenyl-pyrophosphoryl-MurNAc-pentapeptide (lipid intermediate I) to form undecaprenyl-pyrophosphoryl-MurNAc-(pentapeptide)GlcNAc (lipid intermediate II). The chain is UDP-N-acetylglucosamine--N-acetylmuramyl-(pentapeptide) pyrophosphoryl-undecaprenol N-acetylglucosamine transferase from Rickettsia conorii (strain ATCC VR-613 / Malish 7).